Reading from the N-terminus, the 321-residue chain is Endoglucanase 1 (321 aa).

The first 27 residues, 1 to 27 (MSRKLRTLMAALCALPLAFAAAPPAHA), serve as a signal peptide directing secretion. Residue aspartate 110 is part of the active site. A disulfide bridge connects residues cysteine 112 and cysteine 156. Aspartate 149 acts as the Proton donor in catalysis. Aspartate 295 acts as the Nucleophile in catalysis.

This sequence belongs to the glycosyl hydrolase 6 (cellulase B) family.

The enzyme catalyses Endohydrolysis of (1-&gt;4)-beta-D-glucosidic linkages in cellulose, lichenin and cereal beta-D-glucans.. In terms of biological role, implicated in the mechanism of induction exerted by cellobiose. The polypeptide is Endoglucanase 1 (celA1) (Streptomyces halstedii).